The sequence spans 371 residues: T-cell acute lymphocytic leukemia protein 1 (371 aa).

The disordered stretch occupies residues 1-71; that stretch reads MMEKRQPELC…DVPLQNSSNG (71 aa). A compositionally biased stretch (basic and acidic residues) spans 34–57; that stretch reads GCKEDEESKREEGDKEGGGRFKGD. The bHLH domain maps to 204–256; that stretch reads VRRIFTNSRERWRQQNVNGAFAELRKLIPTHPPDKKLSKNEILRLAMKYISFL. The disordered stretch occupies residues 263–371; it reads QDGGRNVSST…GRPLDGSSRR (109 aa). The span at 293–305 shows a compositional bias: basic and acidic residues; the sequence is HQDRVVGLARDDI. The span at 321 to 335 shows a compositional bias: acidic residues; the sequence is GDADGSPESFMEDQD.

In terms of tissue distribution, expressed in the main hemopoietic organs in adults, namely the kidney and the spleen. Also expressed in the liver, brain, gill and gonads.

The protein localises to the nucleus. Transcription factor that plays a pivotal role in hemopoietic and endothelial development. This is T-cell acute lymphocytic leukemia protein 1 from Takifugu rubripes (Japanese pufferfish).